Reading from the N-terminus, the 122-residue chain is UPF0102 protein VCM66_0538 (122 aa).

Belongs to the UPF0102 family.

The protein is UPF0102 protein VCM66_0538 of Vibrio cholerae serotype O1 (strain M66-2).